A 373-amino-acid chain; its full sequence is Chaperone protein DnaJ (373 aa).

One can recognise a J domain in the interval asparagine 4 to glycine 68. The segment at glycine 136–glutamine 214 adopts a CR-type zinc-finger fold. Zn(2+) contacts are provided by cysteine 149, cysteine 152, cysteine 166, cysteine 169, cysteine 188, cysteine 191, cysteine 202, and cysteine 205. CXXCXGXG motif repeat units lie at residues cysteine 149–glycine 156, cysteine 166–glycine 173, cysteine 188–glycine 195, and cysteine 202–glycine 209.

The protein belongs to the DnaJ family. As to quaternary structure, homodimer. It depends on Zn(2+) as a cofactor.

Its subcellular location is the cytoplasm. Its function is as follows. Participates actively in the response to hyperosmotic and heat shock by preventing the aggregation of stress-denatured proteins and by disaggregating proteins, also in an autonomous, DnaK-independent fashion. Unfolded proteins bind initially to DnaJ; upon interaction with the DnaJ-bound protein, DnaK hydrolyzes its bound ATP, resulting in the formation of a stable complex. GrpE releases ADP from DnaK; ATP binding to DnaK triggers the release of the substrate protein, thus completing the reaction cycle. Several rounds of ATP-dependent interactions between DnaJ, DnaK and GrpE are required for fully efficient folding. Also involved, together with DnaK and GrpE, in the DNA replication of plasmids through activation of initiation proteins. This is Chaperone protein DnaJ from Rickettsia rickettsii (strain Iowa).